The chain runs to 534 residues: CD276 antigen (534 aa).

Residues M1 to A28 form the signal peptide. Residues L29–A139 enclose the Ig-like V-type 1 domain. The Extracellular portion of the chain corresponds to L29–A466. 4 disulfide bridges follow: C50/C122, C165/C220, C268/C340, and C383/C438. N104, N189, N215, N322, N407, and N433 each carry an N-linked (GlcNAc...) asparagine glycan. The Ig-like C2-type 1 domain maps to P145–T238. Residues P243–A357 form the Ig-like V-type 2 domain. The 94-residue stretch at P363 to T456 folds into the Ig-like C2-type 2 domain. A helical transmembrane segment spans residues L467–V487. The Cytoplasmic segment spans residues C488 to A534. Residues E498 to G510 show a composition bias toward acidic residues. Residues E498–A534 are disordered. S525 is subject to Phosphoserine.

Belongs to the immunoglobulin superfamily. BTN/MOG family. In terms of assembly, interacts with TREML2 and this interaction enhances T-cell activation. Ubiquitous but not detectable in peripheral blood lymphocytes or granulocytes. Weakly expressed in resting monocytes. Expressed in dendritic cells derived from monocytes. Expressed in epithelial cells of sinonasal tissue. Expressed in extravillous trophoblast cells and Hofbauer cells of the first trimester placenta and term placenta.

The protein resides in the membrane. May participate in the regulation of T-cell-mediated immune response. May play a protective role in tumor cells by inhibiting natural-killer mediated cell lysis as well as a role of marker for detection of neuroblastoma cells. May be involved in the development of acute and chronic transplant rejection and in the regulation of lymphocytic activity at mucosal surfaces. Could also play a key role in providing the placenta and fetus with a suitable immunological environment throughout pregnancy. Both isoform 1 and isoform 2 appear to be redundant in their ability to modulate CD4 T-cell responses. Isoform 2 is shown to enhance the induction of cytotoxic T-cells and selectively stimulates interferon gamma production in the presence of T-cell receptor signaling. In Homo sapiens (Human), this protein is CD276 antigen (CD276).